The sequence spans 172 residues: Small ribosomal subunit protein uS5 (172 aa).

In terms of domain architecture, S5 DRBM spans 16-79 (LKDRLVAINR…ESAKKNLTRV (64 aa)).

Belongs to the universal ribosomal protein uS5 family. Part of the 30S ribosomal subunit. Contacts proteins S4 and S8.

In terms of biological role, with S4 and S12 plays an important role in translational accuracy. Its function is as follows. Located at the back of the 30S subunit body where it stabilizes the conformation of the head with respect to the body. In Bacteroides fragilis (strain ATCC 25285 / DSM 2151 / CCUG 4856 / JCM 11019 / LMG 10263 / NCTC 9343 / Onslow / VPI 2553 / EN-2), this protein is Small ribosomal subunit protein uS5.